The chain runs to 429 residues: UDP-N-acetylglucosamine 1-carboxyvinyltransferase 2 (429 aa).

22 to 23 lines the phosphoenolpyruvate pocket; sequence KN. Arginine 92 is a binding site for UDP-N-acetyl-alpha-D-glucosamine. Residue cysteine 116 is the Proton donor of the active site. 2-(S-cysteinyl)pyruvic acid O-phosphothioketal is present on cysteine 116. UDP-N-acetyl-alpha-D-glucosamine-binding positions include 121 to 125, aspartate 305, and isoleucine 327; that span reads RPIDQ.

This sequence belongs to the EPSP synthase family. MurA subfamily.

The protein resides in the cytoplasm. It catalyses the reaction phosphoenolpyruvate + UDP-N-acetyl-alpha-D-glucosamine = UDP-N-acetyl-3-O-(1-carboxyvinyl)-alpha-D-glucosamine + phosphate. It participates in cell wall biogenesis; peptidoglycan biosynthesis. Cell wall formation. Adds enolpyruvyl to UDP-N-acetylglucosamine. In Bacillus subtilis (strain 168), this protein is UDP-N-acetylglucosamine 1-carboxyvinyltransferase 2.